A 245-amino-acid chain; its full sequence is Eukaryotic translation initiation factor 6 (245 aa).

The protein belongs to the eIF-6 family. As to quaternary structure, monomer. Associates with the 60S ribosomal subunit.

Its subcellular location is the cytoplasm. The protein localises to the nucleus. It is found in the nucleolus. Its function is as follows. Binds to the 60S ribosomal subunit and prevents its association with the 40S ribosomal subunit to form the 80S initiation complex in the cytoplasm. May also be involved in ribosome biogenesis. This Tetrahymena thermophila (strain SB210) protein is Eukaryotic translation initiation factor 6.